Here is a 120-residue protein sequence, read N- to C-terminus: Large ribosomal subunit protein bL12 (120 aa).

This sequence belongs to the bacterial ribosomal protein bL12 family. Homodimer. Part of the ribosomal stalk of the 50S ribosomal subunit. Forms a multimeric L10(L12)X complex, where L10 forms an elongated spine to which 2 to 4 L12 dimers bind in a sequential fashion. Binds GTP-bound translation factors.

Functionally, forms part of the ribosomal stalk which helps the ribosome interact with GTP-bound translation factors. Is thus essential for accurate translation. The sequence is that of Large ribosomal subunit protein bL12 from Listeria monocytogenes serotype 4b (strain CLIP80459).